A 461-amino-acid chain; its full sequence is Epidermin leader peptide-processing serine protease EpiP (461 aa).

An N-terminal signal peptide occupies residues Met-1–Ala-23. One can recognise a Peptidase S8 domain in the interval Gln-121 to Leu-459. Active-site charge relay system residues include Asp-149, His-194, and Ser-402.

It belongs to the peptidase S8 family.

Its pathway is antibiotic biosynthesis; epidermin biosynthesis. Functionally, protease which cleaves the matured lantibiotic from the modified prepeptide. This is Epidermin leader peptide-processing serine protease EpiP (epiP) from Staphylococcus epidermidis.